The primary structure comprises 2527 residues: Neurogenic locus notch homolog protein 1 (2527 aa).

The signal sequence occupies residues 1 to 36 (MGRSDSRAGALLEGGCEQNIDPRRAAHCHHPRLATS). Over 37 to 1741 (SLRCSQPSGT…VEPPLPSQLH (1705 aa)) the chain is Extracellular. 33 cysteine pairs are disulfide-bonded: Cys-40–Cys-53, Cys-47–Cys-62, Cys-64–Cys-73, Cys-79–Cys-90, Cys-84–Cys-103, Cys-105–Cys-114, Cys-122–Cys-133, Cys-127–Cys-143, Cys-145–Cys-154, Cys-160–Cys-171, Cys-165–Cys-180, Cys-182–Cys-191, Cys-198–Cys-211, Cys-205–Cys-220, Cys-222–Cys-231, Cys-238–Cys-249, Cys-243–Cys-259, Cys-261–Cys-270, Cys-277–Cys-288, Cys-282–Cys-297, Cys-299–Cys-308, Cys-315–Cys-328, Cys-322–Cys-337, Cys-339–Cys-348, Cys-355–Cys-366, Cys-360–Cys-375, Cys-377–Cys-386, Cys-392–Cys-403, Cys-397–Cys-414, Cys-416–Cys-425, Cys-432–Cys-445, Cys-439–Cys-454, and Cys-456–Cys-465. Residue Asn-57 is glycosylated (N-linked (GlcNAc...) asparagine). 3 EGF-like domains span residues 75–115 (DPNP…PLCL), 118–155 (LDNA…KSCQ), and 156–192 (QADP…PTCR). Ser-81 carries O-linked (Glc...) serine glycosylation. O-linked (Fuc...) threonine glycosylation is present at Thr-89. Thr-132 is a glycosylation site (O-linked (Fuc...) threonine). Residue Ser-162 is glycosylated (O-linked (Glc...) serine). An EGF-like 4; calcium-binding domain is found at 194 to 232 (DVNECSQNPGLCRHGGTCHNEIGSYRCVCRATHTGPHCE). The O-linked (Fuc...) threonine glycan is linked to Thr-210. The EGF-like 5 domain occupies 234 to 271 (PYVPCSPSPCQNGGTCRPTGDTTHECACLPGFAGQNCE). Thr-248 is a glycosylation site (O-linked (Fuc...) threonine; alternate). An O-linked (GalNAc...) threonine; alternate glycan is attached at Thr-248. An EGF-like 6; calcium-binding domain is found at 273–309 (NVDDCPGNNCKNGGACVDGVNTYNCRCPPEWTGQYCT). The 39-residue stretch at 311 to 349 (DVDECQLMPNACQNGGTCHNTHGGYNCVCVNGWTGEDCS) folds into the EGF-like 7; calcium-binding domain. A glycan (O-linked (Fuc...) threonine) is linked at Thr-327. The region spanning 351-387 (NIDDCASAACFQGATCHDRVASFYCECPHGRTGLLCH) is the EGF-like 8; calcium-binding domain. Ser-357 is a glycosylation site (O-linked (Glc...) serine). O-linked (Fuc...) threonine glycosylation occurs at Thr-365. Residues 388 to 426 (LNDACISNPCNEGSNCDTNPVNGKAICTCPSGYTGPACS) form the EGF-like 9 domain. Ser-394 carries O-linked (Glc...) serine glycosylation. The EGF-like 10; calcium-binding domain occupies 428–466 (DVDECALGANPCEHAGKCLNTLGSFECQCLQGYTGPRCE). Residues 436–437 (AN) form an interaction with DLL4 region. Ca(2+) contacts are provided by Thr-448 and Ser-451. Ser-451 is a glycosylation site (O-linked (Glc...) serine). The interaction with DLL4 stretch occupies residues 464–468 (RCEID). Positions 468, 469, and 471 each coordinate Ca(2+). The region spanning 468–504 (DVNECISNPCQNDATCLDQIGEFQCICMPGYEGVYCE) is the EGF-like 11; calcium-binding domain. 3 disulfides stabilise this stretch: Cys-472/Cys-483, Cys-477/Cys-492, and Cys-494/Cys-503. Ser-474 carries an O-linked (Glc...) serine glycan. An O-linked (Fuc...) threonine glycan is attached at Thr-482. Ca(2+) contacts are provided by Asp-485 and Gln-486. Residues Asn-506, Thr-507, and Glu-509 each coordinate Ca(2+). The EGF-like 12; calcium-binding domain maps to 506-542 (NTDECASSPCLHNGHCMDKINEFLCQCPKGFSGHLCQ). 28 disulfide bridges follow: Cys-510–Cys-521, Cys-515–Cys-530, Cys-532–Cys-541, Cys-548–Cys-559, Cys-553–Cys-568, Cys-570–Cys-579, Cys-586–Cys-596, Cys-591–Cys-605, Cys-607–Cys-616, Cys-623–Cys-634, Cys-628–Cys-643, Cys-645–Cys-654, Cys-661–Cys-671, Cys-666–Cys-680, Cys-682–Cys-691, Cys-698–Cys-709, Cys-703–Cys-718, Cys-720–Cys-729, Cys-736–Cys-746, Cys-741–Cys-755, Cys-757–Cys-766, Cys-773–Cys-784, Cys-778–Cys-793, Cys-795–Cys-804, Cys-811–Cys-822, Cys-816–Cys-831, Cys-833–Cys-842, and Cys-849–Cys-860. The O-linked (Glc...) serine glycan is linked to Ser-512. Residues Asp-523 and Lys-524 each contribute to the Ca(2+) site. One can recognise an EGF-like 13; calcium-binding domain in the interval 544 to 580 (DVDECASTPCKNGAKCLDGPNTYTCVCTEGYTGTHCE). Ser-550 carries an O-linked (Glc...) serine glycan. The EGF-like 14; calcium-binding domain occupies 582–617 (DIDECDPDPCHYGFCKDGVATFTCLCQPGYTGHHCE). The 37-residue stretch at 619–655 (NINECHSQPCRHGGTCQDRDNSYLCLCLKGTTGPNCE) folds into the EGF-like 15; calcium-binding domain. Residue Ser-625 is glycosylated (O-linked (Glc...) serine). An O-linked (Fuc...) threonine glycan is attached at Thr-633. The EGF-like 16; calcium-binding domain maps to 657–692 (NLDDCASNPCDSGTCLDKIDGYECACEPGYTGSMCN). Ser-663 carries O-linked (Glc...) serine glycosylation. In terms of domain architecture, EGF-like 17; calcium-binding spans 694 to 730 (NIDECAGSPCHNGGTCEDGIAGFTCRCPEGYHDPTCL). A glycan (O-linked (Fuc...) threonine) is linked at Thr-708. An EGF-like 18; calcium-binding domain is found at 732–767 (EVNECNSNPCIHGACRDGLNGYKCDCAPGWSGTNCD). O-linked (Glc...) serine glycosylation occurs at Ser-738. The region spanning 769–805 (NNNECESNPCVNGGTCKDMTSGYVCTCREGFSGPNCQ) is the EGF-like 19 domain. A glycan (O-linked (Glc...) serine) is linked at Ser-775. A glycan (O-linked (Fuc...) threonine) is linked at Thr-783. Ser-800 carries O-linked (GlcNAc) serine glycosylation. Positions 807-843 (NINECASNPCLNQGTCIDDVAGYKCNCPLPYTGATCE) constitute an EGF-like 20; calcium-binding domain. O-linked (Glc...) serine glycosylation occurs at Ser-813. Thr-821 carries O-linked (Fuc...) threonine glycosylation. The 39-residue stretch at 845–883 (VLAPCATSPCKNSGVCKESEDYESFSCVCPTGWQGQTCE) folds into the EGF-like 21 domain. Residues 885 to 921 (DINECVKSPCRHGASCQNTNGSYRCLCQAGYTGRNCE) form the EGF-like 22; calcium-binding domain. Asn-904 is a glycosylation site (N-linked (GlcNAc...) asparagine). Thr-916 carries an O-linked (GlcNAc) threonine glycan. Positions 923–959 (DIDDCRPNPCHNGGSCTDGINMAFCDCLPGFQGAFCE) constitute an EGF-like 23 domain. Ser-937 is a glycosylation site (O-linked (Fuc) serine). An EGF-like 24; calcium-binding domain is found at 961–997 (DINECASNPCRNGANCTDCVDSYTCTCPAGFNGIHCE). O-linked (Glc...) serine glycosylation is present at Ser-967. N-linked (GlcNAc...) asparagine glycosylation occurs at Asn-975. EGF-like domains are found at residues 999-1035 (NTPD…SYCQ), 1037-1073 (DVNE…LNCQ), 1075-1111 (LVHW…FNCD), 1113-1159 (LSVS…SYCE), and 1161-1197 (EVDE…SNCS). A glycan (O-linked (Fuc...) threonine) is linked at Thr-1013. O-linked (Glc...) serine glycosylation occurs at Ser-1043. Thr-1051 carries O-linked (Fuc...) threonine glycosylation. O-linked (Glc...) serine glycosylation is present at Ser-1081. A disulfide bridge connects residues Cys-1117 and Cys-1138. A glycan (O-linked (Fuc...) threonine) is linked at Thr-1175. Asn-1195 is a glycosylation site (N-linked (GlcNAc...) asparagine). Residues 1199 to 1235 (EINECLSQPCQNGGTCIDLTNTYKCSCPRGTQGVHCE) enclose the EGF-like 30; calcium-binding domain. O-linked (Glc...) serine glycosylation occurs at Ser-1205. Thr-1213 is a glycosylation site (O-linked (Fuc...) threonine). An EGF-like 31; calcium-binding domain is found at 1237–1281 (NVDDCHPHLDPASRSPKCFNNGTCVDQVGGYSCTCPPGFVGERCE). An N-linked (GlcNAc...) asparagine glycan is attached at Asn-1257. 4 EGF-like domains span residues 1283 to 1321 (DINE…RRCE), 1323 to 1362 (VING…ATCE), 1364 to 1400 (DART…PECQ), and 1403 to 1442 (ASSP…LLCH). An O-linked (Glc...) serine glycan is attached at Ser-1289. An O-linked (Fuc...) threonine glycan is attached at Thr-1378. An O-linked (GlcNAc...) threonine glycan is attached at Thr-1395. Thr-1418 carries O-linked (Fuc...) threonine; alternate glycosylation. Residue Thr-1418 is glycosylated (O-linked (GalNAc...) threonine; alternate). 3 LNR repeats span residues 1465 to 1505 (CELP…PWKN), 1506 to 1547 (CTQS…CNPL), and 1548 to 1587 (YDQY…RLAA). Positions 1473, 1476, 1491, and 1494 each coordinate Ca(2+). Asn-1505 carries N-linked (GlcNAc...) asparagine glycosylation. Asn-1603 is a glycosylation site (N-linked (GlcNAc...) asparagine). A glycan (O-linked (GalNAc...) threonine) is linked at Thr-1731. The tract at residues 1734–1766 (PPLPSQLHLMYLAAAAFVLLFFVGCGVLLSRKR) is interaction with PSEN1. A helical membrane pass occupies residues 1742–1762 (LMYLAAAAFVLLFFVGCGVLL). Topologically, residues 1763-2527 (SRKRRRQHGQ…QITHIPEAFK (765 aa)) are cytoplasmic. Residue Lys-1765 forms a Glycyl lysine isopeptide (Lys-Gly) (interchain with G-Cter in ubiquitin) linkage. Residues 1786-1814 (KKKRREPLGEDSVGLKPLKNASDGALMDD) form a disordered region. At Thr-1867 the chain carries Phosphothreonine. ANK repeat units follow at residues 1933-1962 (TGET…DANI), 1966-1996 (MGRT…DLDA), 2000-2029 (DGTT…DVNA), 2033-2062 (LGKS…NKDM), and 2066-2095 (KEET…NRDI). The segment at 1953–1961 (LLEASADAN) is HIF1AN-binding. At Asn-1961 the chain carries (3S)-3-hydroxyasparagine; by HIF1AN; partial. An HIF1AN-binding region spans residues 2020 to 2028 (LINSHADVN). Asn-2028 is modified ((3S)-3-hydroxyasparagine; by HIF1AN). Disordered stretches follow at residues 2157–2201 (SATQ…DSSS), 2378–2424 (QPQN…SLPV), and 2436–2527 (PTSL…EAFK). Over residues 2378–2391 (QPQNLQPPSQPHLS) the composition is skewed to low complexity. The segment covering 2436–2474 (PTSLPSSMVPPMTTTQFLTPPSQHSYSSSPVDNTPSHQL) has biased composition (polar residues). The segment covering 2484–2499 (PSPESPDQWSSSSPHS) has biased composition (low complexity). Residues 2500-2520 (NISDWSEGISSPPTSMPSQIT) show a composition bias toward polar residues.

Belongs to the NOTCH family. In terms of assembly, heterodimer of a C-terminal fragment N(TM) and an N-terminal fragment N(EC) which are probably linked by disulfide bonds. Interacts with DNER, DTX1, DTX2 and RBPJ/RBPSUH. Also interacts with MAML1, MAML2 and MAML3 which act as transcriptional coactivators for NOTCH1. Notch 1 intracellular domain interacts with SNW1; the interaction involves multimerized NOTCH1 NICD and is implicated in a formation of an intermediate preactivation complex which associates with DNA-bound CBF-1/RBPJ. The activated membrane-bound form interacts with AAK1 which promotes NOTCH1 stabilization. Forms a trimeric complex with FBXW7 and SGK1. Interacts with HIF1AN. HIF1AN negatively regulates the function of notch intracellular domain (NICD), accelerating myogenic differentiation. Interacts (via NICD) with SNAI1 (via zinc fingers); the interaction induces SNAI1 degradation via MDM2-mediated ubiquitination and inhibits SNAI1-induced cell invasion. Interacts (via NICD) with MDM2A. Interacts (via NICD) with BCL6; the interaction decreases MAML1 recruitment by NOTCH1 NICD on target genes DNA and inhibits NOTCH1 transactivation activity. Interacts with THBS4. Interacts (via the EGF-like repeat region) with CCN3 (via CTCK domain). Interacts (via EGF-like domains) with DLL4 (via N-terminal DSL and MNNL domains). Interacts with ZMIZ1. Interacts (via NICD domain) with MEGF10 (via the cytoplasmic domain). Interacts with DLL1 and JAG1. Interacts (via NICD domain) with PRAG1. Forms a complex with PRAG1, N1ICD and MAML1, in a MAML1-dependent manner. Interacts (via transmembrane region) with PSEN1; the interaction is direct. Interacts with ZFP64. Synthesized in the endoplasmic reticulum as an inactive form which is proteolytically cleaved by a furin-like convertase in the trans-Golgi network before it reaches the plasma membrane to yield an active, ligand-accessible form. Cleavage results in a C-terminal fragment N(TM) and a N-terminal fragment N(EC). Following ligand binding, it is cleaved by ADAM17 to yield a membrane-associated intermediate fragment called notch extracellular truncation (NEXT). Following endocytosis, this fragment is then cleaved by one of the catalytic subunits of gamma-secretase (PSEN1 or PSEN2) to release a Notch-derived peptide containing the intracellular domain (NICD) from the membrane. Post-translationally, phosphorylated. In terms of processing, O-linked glycosylation by GALNT11 is involved in determination of left/right symmetry: glycosylation promotes activation of NOTCH1, possibly by promoting cleavage by ADAM17, modulating the balance between motile and immotile (sensory) cilia at the left-right organiser (LRO). O-glycosylated on the EGF-like domains. O-glucosylated at Ser-451 by KDELC1 and KDELC2. Contains both O-linked fucose and O-linked glucose in the EGF-like domains 11, 12 and 13, which are interacting with the residues on DLL4. MFNG-, RFNG- and LFNG-mediated modification of O-fucose residues at specific EGF-like domains results in inhibition of its activation by JAG1 and enhancement of its activation by DLL1 via an increased binding to DLL1. Ubiquitinated. Undergoes 'Lys-29'-linked polyubiquitination by ITCH; promotes the lysosomal degradation of non-activated internalized NOTCH1. Deubiquitination by USP12 is required for transport of internalized non-activated receptor from late endosomes to lysosomes for degradation. Monoubiquitination at Lys-1765 is required for activation by gamma-secretase cleavage, it promotes interaction with AAK1, which stabilizes it. Deubiquitination by EIF3F is necessary for nuclear import of activated Notch. Post-translationally, hydroxylated at Asn-1961 by HIF1AN. Hydroxylated at Asn-2028 by HIF1AN. Hydroxylation reduces affinity for HI1AN and may thus indirectly modulate negative regulation of NICD.

It localises to the cell membrane. Its subcellular location is the late endosome membrane. The protein resides in the nucleus. Functions as a receptor for membrane-bound ligands Jagged-1 (JAG1), Jagged-2 (JAG2) and Delta-1 (DLL1) to regulate cell-fate determination. Upon ligand activation through the released notch intracellular domain (NICD) it forms a transcriptional activator complex with RBPJ/RBPSUH and activates genes of the enhancer of split locus. Affects the implementation of differentiation, proliferation and apoptotic programs. Involved in angiogenesis; negatively regulates endothelial cell proliferation and migration and angiogenic sprouting. Involved in the maturation of both CD4(+) and CD8(+) cells in the thymus. Important for follicular differentiation and possibly cell fate selection within the follicle. During cerebellar development, functions as a receptor for neuronal DNER and is involved in the differentiation of Bergmann glia. Represses neuronal and myogenic differentiation. May play an essential role in postimplantation development, probably in some aspect of cell specification and/or differentiation. May be involved in mesoderm development, somite formation and neurogenesis. May enhance HIF1A function by sequestering HIF1AN away from HIF1A. Required for the THBS4 function in regulating protective astrogenesis from the subventricular zone (SVZ) niche after injury. Involved in determination of left/right symmetry by modulating the balance between motile and immotile (sensory) cilia at the left-right organiser (LRO). The polypeptide is Neurogenic locus notch homolog protein 1 (NOTCH1) (Cricetulus griseus (Chinese hamster)).